We begin with the raw amino-acid sequence, 284 residues long: D-tagatose-1,6-bisphosphate aldolase subunit GatY (284 aa).

Aspartate 82 (proton donor) is an active-site residue. 2 residues coordinate Zn(2+): histidine 83 and histidine 180. Residue glycine 181 participates in dihydroxyacetone phosphate binding. Histidine 208 is a Zn(2+) binding site. Residues 209 to 211 and 230 to 233 contribute to the dihydroxyacetone phosphate site; these read GAS and NVAT.

It belongs to the class II fructose-bisphosphate aldolase family. TagBP aldolase GatY subfamily. As to quaternary structure, forms a complex with GatZ. Zn(2+) is required as a cofactor.

The enzyme catalyses D-tagatofuranose 1,6-bisphosphate = D-glyceraldehyde 3-phosphate + dihydroxyacetone phosphate. Its pathway is carbohydrate metabolism; D-tagatose 6-phosphate degradation; D-glyceraldehyde 3-phosphate and glycerone phosphate from D-tagatose 6-phosphate: step 2/2. Functionally, catalytic subunit of the tagatose-1,6-bisphosphate aldolase GatYZ, which catalyzes the reversible aldol condensation of dihydroxyacetone phosphate (DHAP or glycerone-phosphate) with glyceraldehyde 3-phosphate (G3P) to produce tagatose 1,6-bisphosphate (TBP). Requires GatZ subunit for full activity and stability. Is involved in the catabolism of galactitol. In Escherichia coli O8 (strain IAI1), this protein is D-tagatose-1,6-bisphosphate aldolase subunit GatY.